The following is a 67-amino-acid chain: MSSLPVMVLFGLSFPPVFFVLLVSLTLFFVVNCLLQPTGIYDFVWHPALFNSALFCCLFYLLFRYGL.

2 helical membrane-spanning segments follow: residues 10–30 (FGLSFPPVFFVLLVSLTLFFV) and 43–63 (FVWHPALFNSALFCCLFYLLF).

Belongs to the AaeX family.

It localises to the cell membrane. The polypeptide is Protein AaeX (Pectobacterium carotovorum subsp. carotovorum (strain PC1)).